The primary structure comprises 82 residues: Penaeidin-3f (82 aa).

Residues 1 to 19 form the signal peptide; sequence MRLVACLVFLASFALVCQG. Glutamine 20 bears the Pyrrolidone carboxylic acid mark. Disulfide bonds link cysteine 51-cysteine 66, cysteine 55-cysteine 73, and cysteine 67-cysteine 74. A Serine amide modification is found at serine 81.

This sequence belongs to the penaeidin family.

Its subcellular location is the cytoplasmic granule. Antibacterial and antifungal activity. Presents chitin-binding activity. This chain is Penaeidin-3f, found in Penaeus vannamei (Whiteleg shrimp).